The following is a 161-amino-acid chain: Monooxygenase AgnL5 (161 aa).

This sequence belongs to the avfA family.

The protein operates within secondary metabolite biosynthesis. In terms of biological role, monooxygenase; part of the gene cluster that mediates the biosynthesis of agnestins, dihydroxy-xanthone metabolites. The pathway begins with the assembly and cyclization of atrochrysone thioester by the non-reducing polyketide synthase Agnpks1. The atrochrysone carboxyl ACP thioesterase AgnL7 then breaks the thioester bond and releases the atrochrysone carboxylic acid as the first enzyme-free intermediate. The decarboxylase AgnL1 then catalyzes the concerted decarboxylation-elimination required to convert atochrysone carboxylic acid into emodin anthrone, which is further oxidized to emodin by the anthrone oxygenase AgnL2. Emodin then undergoes reduction catalyzed by the oxidoreductase AgnL4 to yield the dihydroquinone tautomer which is the substrate for reduction by the short chain dehydrogenase AgnL6 reduction to produce hydroxyketone, followed by AgnL8 dehydration and likely spontaneous autoxidation to chrysophanol. Baeyer-Villiger oxidation by the oxidase AgnL3 leads to monodictyphenone via cleavage of the C-10/C-10a bond of chrysophanol. Alternative cleavage at the C-4a/C-10 bond of chrysophanol also leads to the formation some cephalone F. Further conversion to agnestins A and B, requires reduction to dihydro-monodictyphenone, oxidation to agnestin C probably via an epoxide, and rearrangement to either agnestin A or agnestin B directly, although agnestin A or agnestin B can also interconvert. Within the cluster, AgnR1 is the only unassigned oxidoreductase present which could be involved in this conversion. However, AgnR1 seems not to be involved in this step, and thus genes involved in the proposed oxidation/reduction may be located elsewhere on the genome. Further agnestin A derivatives are probably formed by spontaneous decarboxylations, dehydrations and methanolysis reactions. In Paecilomyces divaricatus (Penicillium divaricatum), this protein is Monooxygenase AgnL5.